We begin with the raw amino-acid sequence, 233 residues long: Orotidine 5'-phosphate decarboxylase (233 aa).

Substrate contacts are provided by residues D11, K34, 61 to 70 (DLKLHDIPNT), T117, R179, Q188, G208, and R209. K63 serves as the catalytic Proton donor.

Belongs to the OMP decarboxylase family. Type 1 subfamily. In terms of assembly, homodimer.

It carries out the reaction orotidine 5'-phosphate + H(+) = UMP + CO2. Its pathway is pyrimidine metabolism; UMP biosynthesis via de novo pathway; UMP from orotate: step 2/2. Functionally, catalyzes the decarboxylation of orotidine 5'-monophosphate (OMP) to uridine 5'-monophosphate (UMP). This chain is Orotidine 5'-phosphate decarboxylase, found in Streptococcus pneumoniae (strain JJA).